We begin with the raw amino-acid sequence, 497 residues long: Serine/threonine-protein phosphatase 2A 56 kDa regulatory subunit beta isoform (497 aa).

Residues Met-1–Leu-19 are compositionally biased toward low complexity. Disordered stretches follow at residues Met-1–Asn-55 and Gln-473–Ser-497. Residues Ser-32, Ser-35, Ser-44, Ser-46, Ser-47, and Ser-48 each carry the phosphoserine modification. A compositionally biased stretch (basic residues) spans Arg-34–His-45.

This sequence belongs to the phosphatase 2A regulatory subunit B56 family. As to quaternary structure, component of the serine/threonine-protein phosphatase 2A complex (PP2A). This complex consists of a common heterodimeric core enzyme, composed of a 36 kDa catalytic subunit (subunit C) and a 65 kDa constant scaffold subunit (PR65 or subunit A), that associates with a variety of regulatory subunits. Proteins that associate with the core dimer include three families of regulatory subunits B (the R2/B/PR55/B55, R3/B''/PR72/PR130/PR59 and R5/B'/B56 families), the 48 kDa variable regulatory subunit, viral proteins, and cell signaling molecules. Interacts with SGO1. Interacts with AKT1. Post-translationally, ubiquitinated by CUL3-KLHL15 complex; this modification leads to proteasomal degradation.

The protein resides in the cytoplasm. Its function is as follows. As the regulatory component of the serine/threonine-protein phosphatase 2A (PP2A) holoenzyme, modulates substrate specificity, subcellular localization, and responsiveness to phosphorylation. The phosphorylated form mediates the interaction between PP2A and AKT1, leading to AKT1 dephosphorylation. This Mus musculus (Mouse) protein is Serine/threonine-protein phosphatase 2A 56 kDa regulatory subunit beta isoform (Ppp2r5b).